The sequence spans 132 residues: Replication enhancer protein (132 aa).

It belongs to the geminiviridae replication enhancer protein family. As to quaternary structure, homooligomer. Interacts with the replication-associated protein (REP). Interacts with host proliferating cell nuclear antigen (PCNA). Interacts with host retinoblastoma-related protein 1 (RBR1), and may thereby deregulate the host cell cycle. Oligomerization and interaction with PCNA are necessary for optimal replication enhancement.

Its function is as follows. Increases viral DNA accumulation. Enhances infectivity and symptom expression. The sequence is that of Replication enhancer protein from Potato yellow mosaic virus (isolate Venezuela) (PYMV).